A 386-amino-acid chain; its full sequence is Succinate--CoA ligase [ADP-forming] subunit beta (386 aa).

The ATP-grasp domain occupies 9–244; it reads KDLLASYDVP…PSQENVRDVL (236 aa). ATP contacts are provided by residues K46, 53–55, V102, and E107; that span reads GRG. The Mg(2+) site is built by N199 and D213. Residues N264 and 321 to 323 each bind substrate; that span reads GIM.

This sequence belongs to the succinate/malate CoA ligase beta subunit family. In terms of assembly, heterotetramer of two alpha and two beta subunits. Mg(2+) serves as cofactor.

The catalysed reaction is succinate + ATP + CoA = succinyl-CoA + ADP + phosphate. It carries out the reaction GTP + succinate + CoA = succinyl-CoA + GDP + phosphate. The protein operates within carbohydrate metabolism; tricarboxylic acid cycle; succinate from succinyl-CoA (ligase route): step 1/1. Functionally, succinyl-CoA synthetase functions in the citric acid cycle (TCA), coupling the hydrolysis of succinyl-CoA to the synthesis of either ATP or GTP and thus represents the only step of substrate-level phosphorylation in the TCA. The beta subunit provides nucleotide specificity of the enzyme and binds the substrate succinate, while the binding sites for coenzyme A and phosphate are found in the alpha subunit. The sequence is that of Succinate--CoA ligase [ADP-forming] subunit beta from Chlamydia pneumoniae (Chlamydophila pneumoniae).